Consider the following 120-residue polypeptide: Large ribosomal subunit protein bL19c (120 aa).

This sequence belongs to the bacterial ribosomal protein bL19 family.

Its subcellular location is the plastid. It is found in the chloroplast. This chain is Large ribosomal subunit protein bL19c, found in Phaeodactylum tricornutum (strain CCAP 1055/1).